A 126-amino-acid polypeptide reads, in one-letter code: Fatty acid-binding protein, liver (126 aa).

Alanine 2 bears the N-acetylalanine mark. Residues arginine 56, glutamine 57, lysine 77, histidine 99, and glutamine 101 each contribute to the cholate site.

It belongs to the calycin superfamily. Fatty-acid binding protein (FABP) family.

The protein localises to the cytoplasm. Functionally, binds free fatty acids and their coenzyme A derivatives, bilirubin, and some other small molecules in the cytoplasm. May be involved in intracellular lipid transport. Binds 2 molecules of cholate per subunit. The chain is Fatty acid-binding protein, liver (FABP1) from Gallus gallus (Chicken).